A 436-amino-acid polypeptide reads, in one-letter code: 3-phosphoshikimate 1-carboxyvinyltransferase (436 aa).

3 residues coordinate 3-phosphoshikimate: Lys-23, Ser-24, and Arg-28. Phosphoenolpyruvate is bound at residue Lys-23. The phosphoenolpyruvate site is built by Gly-97 and Arg-126. 4 residues coordinate 3-phosphoshikimate: Ser-171, Gln-173, Asp-323, and Lys-350. A phosphoenolpyruvate-binding site is contributed by Gln-173. The active-site Proton acceptor is the Asp-323. Residues Arg-354 and Arg-396 each contribute to the phosphoenolpyruvate site.

The protein belongs to the EPSP synthase family. In terms of assembly, monomer.

The protein resides in the cytoplasm. It catalyses the reaction 3-phosphoshikimate + phosphoenolpyruvate = 5-O-(1-carboxyvinyl)-3-phosphoshikimate + phosphate. It functions in the pathway metabolic intermediate biosynthesis; chorismate biosynthesis; chorismate from D-erythrose 4-phosphate and phosphoenolpyruvate: step 6/7. Functionally, catalyzes the transfer of the enolpyruvyl moiety of phosphoenolpyruvate (PEP) to the 5-hydroxyl of shikimate-3-phosphate (S3P) to produce enolpyruvyl shikimate-3-phosphate and inorganic phosphate. This is 3-phosphoshikimate 1-carboxyvinyltransferase from Prochlorococcus marinus (strain MIT 9301).